The chain runs to 255 residues: Phosphatidylglycerol--prolipoprotein diacylglyceryl transferase (255 aa).

The next 3 helical transmembrane spans lie at 15–35 (WYGI…NLNC), 46–66 (IDVF…YYVV), and 84–104 (LGGL…YIVS). Residue arginine 130 coordinates a 1,2-diacyl-sn-glycero-3-phospho-(1'-sn-glycerol). The next 3 membrane-spanning stretches (helical) occupy residues 169–189 (PTFL…VYIF), 196–216 (GTVI…IEGL), and 228–248 (VAQL…VYLK).

The protein belongs to the Lgt family.

It is found in the cell membrane. The catalysed reaction is L-cysteinyl-[prolipoprotein] + a 1,2-diacyl-sn-glycero-3-phospho-(1'-sn-glycerol) = an S-1,2-diacyl-sn-glyceryl-L-cysteinyl-[prolipoprotein] + sn-glycerol 1-phosphate + H(+). It functions in the pathway protein modification; lipoprotein biosynthesis (diacylglyceryl transfer). Catalyzes the transfer of the diacylglyceryl group from phosphatidylglycerol to the sulfhydryl group of the N-terminal cysteine of a prolipoprotein, the first step in the formation of mature lipoproteins. The polypeptide is Phosphatidylglycerol--prolipoprotein diacylglyceryl transferase (Clostridium kluyveri (strain NBRC 12016)).